The primary structure comprises 83 residues: Sulfur carrier protein TusA (83 aa).

Cys20 functions as the Cysteine persulfide intermediate in the catalytic mechanism.

It belongs to the sulfur carrier protein TusA family.

Its subcellular location is the cytoplasm. Its function is as follows. Sulfur carrier protein which probably makes part of a sulfur-relay system. The chain is Sulfur carrier protein TusA from Pseudomonas fluorescens (strain SBW25).